A 323-amino-acid chain; its full sequence is Olfactory receptor 5P58 (323 aa).

The Extracellular segment spans residues 1-28 (MAFLEDGNHTAVTEFILVGLTDDPVLKV). N-linked (GlcNAc...) asparagine glycosylation occurs at Asn-8. Residues 29-49 (ILFTIILCIYLVTVSGNLSTI) traverse the membrane as a helical segment. Residues 50-57 (LLIRVSSQ) lie on the Cytoplasmic side of the membrane. Residues 58–78 (LHHPMYFFLSHLASVDLGYSS) form a helical membrane-spanning segment. The Extracellular portion of the chain corresponds to 79-102 (SVTPNMLINFLAENNTISYIGCSI). Asn-92 carries N-linked (GlcNAc...) asparagine glycosylation. Cysteines 100 and 192 form a disulfide. Residues 103-123 (QFGSATFFGVLECFLLAVMAY) form a helical membrane-spanning segment. The Cytoplasmic segment spans residues 124 to 136 (DRFVAICNPLLYS). Residues 137-157 (IKMSTQVCVKLVVGSYIGSSL) traverse the membrane as a helical segment. Over 158–199 (NASFVTVSIFNLLFCGPNKINHFFCDFDPLIELSCSDVSVPV) the chain is Extracellular. Residues 200–220 (AVTSCSAGLITMITVFVIAVS) traverse the membrane as a helical segment. Residues 221–240 (YTYILITVLKMRSTEGRHKA) lie on the Cytoplasmic side of the membrane. A helical transmembrane segment spans residues 241–261 (FSTCTSHLTAVTLFYGTVTFI). At 262 to 274 (YVMPKSNYSTDQN) the chain is on the extracellular side. An N-linked (GlcNAc...) asparagine glycan is attached at Asn-268. Residues 275 to 295 (KVVSVFYMVVIPMLNPLIYSL) form a helical membrane-spanning segment. Topologically, residues 296–323 (RNNEIKGALKRQLGKKIFSQSNILFCKS) are cytoplasmic.

The protein belongs to the G-protein coupled receptor 1 family.

It is found in the cell membrane. Functionally, potential odorant receptor. The sequence is that of Olfactory receptor 5P58 from Mus musculus (Mouse).